Here is a 560-residue protein sequence, read N- to C-terminus: Oxygen-dependent choline dehydrogenase (560 aa).

6–35 (DYIIIGGGSAGSVLGSRISEDVSNNVLVLE) is an FAD binding site. The active-site Proton acceptor is histidine 472.

This sequence belongs to the GMC oxidoreductase family. FAD is required as a cofactor.

The enzyme catalyses choline + A = betaine aldehyde + AH2. It catalyses the reaction betaine aldehyde + NAD(+) + H2O = glycine betaine + NADH + 2 H(+). The protein operates within amine and polyamine biosynthesis; betaine biosynthesis via choline pathway; betaine aldehyde from choline (cytochrome c reductase route): step 1/1. Its function is as follows. Involved in the biosynthesis of the osmoprotectant glycine betaine. Catalyzes the oxidation of choline to betaine aldehyde and betaine aldehyde to glycine betaine at the same rate. The chain is Oxygen-dependent choline dehydrogenase from Staphylococcus saprophyticus subsp. saprophyticus (strain ATCC 15305 / DSM 20229 / NCIMB 8711 / NCTC 7292 / S-41).